Consider the following 104-residue polypeptide: uncharacterized protein (104 aa).

Residues Gly-80–Leu-98 form a helical membrane-spanning segment.

The protein resides in the membrane. This is an uncharacterized protein from Saccharomyces cerevisiae (strain ATCC 204508 / S288c) (Baker's yeast).